Here is a 138-residue protein sequence, read N- to C-terminus: Transmembrane protein 170A (138 aa).

Topologically, residues 1–44 are lumenal; it reads MEGSEAGGGGLLQQILSLRLVPRVGNGTTYSSPLSTFPEMWYGV. N-linked (GlcNAc...) asparagine glycosylation occurs at asparagine 26. The chain crosses the membrane as a helical span at residues 45–65; the sequence is FLWALVSSLSFHVPAALLALF. The Cytoplasmic segment spans residues 66–79; sequence TLRHHKYGRFMSVS. Residues 80 to 100 traverse the membrane as a helical segment; sequence LLLMGIVGPITAGILTSAAIA. Residues 101 to 110 lie on the Lumenal side of the membrane; that stretch reads GVYRAAGKKM. A helical transmembrane segment spans residues 111–131; that stretch reads IPFEALIFEVGQTFCVVVVSF. Over 132–138 the chain is Cytoplasmic; sequence LRILATL.

This sequence belongs to the TMEM170 family.

It is found in the endoplasmic reticulum membrane. It localises to the nucleus envelope. Functionally, may regulate membrane morphogenesis in the endoplasmic reticulum (ER) by promoting ER sheet formation at the expense of ER tubules. The polypeptide is Transmembrane protein 170A (TMEM170A) (Gallus gallus (Chicken)).